The primary structure comprises 107 residues: MSITMSDSAAQRVQAFMNNRGKGLGLRLGVRTSGCSGMAYVLEFVDDMNDDDIVFENKGVKVIIDGKSLVYLDGTELDFVKEGLNEGFKFNNPNVSSECGCGESFNV.

The Fe cation site is built by cysteine 35, cysteine 99, and cysteine 101.

The protein belongs to the HesB/IscA family. Homodimer; may form tetramers and higher multimers. Fe cation is required as a cofactor.

Is able to transfer iron-sulfur clusters to apo-ferredoxin. Multiple cycles of [2Fe2S] cluster formation and transfer are observed, suggesting that IscA acts catalytically. Recruits intracellular free iron so as to provide iron for the assembly of transient iron-sulfur cluster in IscU in the presence of IscS, L-cysteine and the thioredoxin reductase system TrxA/TrxB. This is Iron-binding protein IscA from Serratia proteamaculans (strain 568).